We begin with the raw amino-acid sequence, 77 residues long: U8-lycotoxin-Ls1t (77 aa).

Residues 1–20 form the signal peptide; sequence MKLIIFTGLVPFAIVSLIEA. The propeptide occupies 21–26; the sequence is QAENEK.

This sequence belongs to the neurotoxin 19 (CSTX) family. 08 (U8-Lctx) subfamily. Contains 4 disulfide bonds. In terms of tissue distribution, expressed by the venom gland.

The protein localises to the secreted. The polypeptide is U8-lycotoxin-Ls1t (Lycosa singoriensis (Wolf spider)).